A 789-amino-acid polypeptide reads, in one-letter code: 1-phosphatidylinositol 4,5-bisphosphate phosphodiesterase delta-3 (789 aa).

The 110-residue stretch at 63–172 folds into the PH domain; sequence RAMLRGSRLR…WVRGLTKLRA (110 aa). Residues 73–101 form a substrate binding region; that stretch reads KIRSRTWHKERLYRLQEDGLSVWFQRRIP. S105 carries the post-translational modification Phosphoserine. 3 EF-hand domains span residues 182-217, 218-253, and 250-285; these read RLDH…VNVD, MNDM…LLKR, and LLKR…QGEE. 10 residues coordinate Ca(2+): D195, N197, D199, K201, E206, D231, S233, N235, R237, and E242. Residues 337–482 form the PI-PLC X-box domain; sequence QDMNQPLAHY…LKGRVLVKGK (146 aa). H352 is an active-site residue. N353, E382, and D384 together coordinate Ca(2+). H397 is a catalytic residue. E431 is a Ca(2+) binding site. Residues 461–519 form a disordered region; sequence SPNPEELPSPEQLKGRVLVKGKKLPAARSEDGRALSDREEEEEDDEEEEEEVEAAAQRR. Substrate-binding residues include K480 and K482. Residues 488–497 are compositionally biased toward basic and acidic residues; sequence RSEDGRALSD. At S496 the chain carries Phosphoserine. A compositionally biased stretch (acidic residues) spans 498-513; it reads REEEEEDDEEEEEEVE. A PI-PLC Y-box domain is found at 528–644; it reads LSALAVYCHA…GYVLKPACLR (117 aa). S557 contacts substrate. The residue at position 573 (S573) is a Phosphoserine. Residue R584 coordinates substrate. Residues 644–769 enclose the C2 domain; that stretch reads RQPDSTFDPE…QGYRHIHLLS (126 aa). The Ca(2+) site is built by I683, D685, N709, D738, Y739, and D740.

Requires Ca(2+) as cofactor. Present in corneal epithelial cells (at protein level).

It localises to the membrane. The protein resides in the cytoplasm. Its subcellular location is the cleavage furrow. The enzyme catalyses a 1,2-diacyl-sn-glycero-3-phospho-(1D-myo-inositol-4,5-bisphosphate) + H2O = 1D-myo-inositol 1,4,5-trisphosphate + a 1,2-diacyl-sn-glycerol + H(+). Its activity is regulated as follows. Strongly activated by phosphatidic acid. Inhibited by phosphatidylethanolamine (PtdEtn), phosphatidylcholine (PtdCho), sphingomyelin and phosphatidylserine (PtdSer). Hydrolyzes the phosphatidylinositol 4,5-bisphosphate (PIP2) to generate 2 second messenger molecules diacylglycerol (DAG) and inositol 1,4,5-trisphosphate (IP3). DAG mediates the activation of protein kinase C (PKC), while IP3 releases Ca(2+) from intracellular stores. Essential for trophoblast and placental development. May participate in cytokinesis by hydrolyzing PIP2 at the cleavage furrow. Regulates neurite outgrowth through the inhibition of RhoA/Rho kinase signaling. This Homo sapiens (Human) protein is 1-phosphatidylinositol 4,5-bisphosphate phosphodiesterase delta-3.